Here is a 151-residue protein sequence, read N- to C-terminus: Putative olfactory receptor 13C6 (151 aa).

Topologically, residues 1–27 are extracellular; that stretch reads MVSANQTASVTEFILLGLSAHPKLEKT. Asparagine 5 is a glycosylation site (N-linked (GlcNAc...) asparagine). Residues 28–48 traverse the membrane as a helical segment; sequence FFVLILLMYLVILLGNGVLIL. The Cytoplasmic segment spans residues 49–61; sequence MTVSNSHLHMPMY. Residues 62-82 traverse the membrane as a helical segment; sequence FFLGNLSFLDICYTTSSVPLI. The Extracellular portion of the chain corresponds to 83–100; that stretch reads LDSFLTPRKTISFSACAV. The helical transmembrane segment at 101 to 121 threads the bilayer; that stretch reads QMFLSFAMGATECVLLSMMAF.

The protein belongs to the G-protein coupled receptor 1 family.

Its subcellular location is the cell membrane. Functionally, odorant receptor. This chain is Putative olfactory receptor 13C6, found in Homo sapiens (Human).